A 310-amino-acid chain; its full sequence is Aspartate carbamoyltransferase catalytic subunit 2 (310 aa).

Carbamoyl phosphate contacts are provided by R55 and T56. Residue K85 participates in L-aspartate binding. 3 residues coordinate carbamoyl phosphate: R106, H134, and Q137. R167 and R228 together coordinate L-aspartate. Residues L266 and P267 each contribute to the carbamoyl phosphate site.

It belongs to the aspartate/ornithine carbamoyltransferase superfamily. ATCase family. Heterododecamer (2C3:3R2) of six catalytic PyrB chains organized as two trimers (C3), and six regulatory PyrI chains organized as three dimers (R2).

It carries out the reaction carbamoyl phosphate + L-aspartate = N-carbamoyl-L-aspartate + phosphate + H(+). The protein operates within pyrimidine metabolism; UMP biosynthesis via de novo pathway; (S)-dihydroorotate from bicarbonate: step 2/3. In terms of biological role, catalyzes the condensation of carbamoyl phosphate and aspartate to form carbamoyl aspartate and inorganic phosphate, the committed step in the de novo pyrimidine nucleotide biosynthesis pathway. This chain is Aspartate carbamoyltransferase catalytic subunit 2, found in Shewanella halifaxensis (strain HAW-EB4).